The primary structure comprises 393 residues: Bone morphogenetic protein 15 (393 aa).

An N-terminal signal peptide occupies residues 1–25; it reads MVLLSILRILLWGLVLFMEHRVQMT. A propeptide spanning residues 26-268 is cleaved from the precursor; that stretch reads QVGQPSIAHL…DPSLLLRRAR (243 aa). Asn86 and Asn237 each carry an N-linked (GlcNAc...) asparagine glycan. Intrachain disulfides connect Cys292/Cys358, Cys321/Cys390, and Cys325/Cys392. An N-linked (GlcNAc...) asparagine glycan is attached at Asn374.

This sequence belongs to the TGF-beta family. In terms of assembly, homodimer. But, in contrast to other members of this family, cannot be disulfide-linked.

The protein localises to the secreted. In terms of biological role, may be involved in follicular development. Oocyte-specific growth/differentiation factor that stimulates folliculogenesis and granulosa cell (GC) growth. The protein is Bone morphogenetic protein 15 (BMP15) of Ovis aries (Sheep).